The primary structure comprises 309 residues: Aspartate carbamoyltransferase catalytic subunit (309 aa).

The carbamoyl phosphate site is built by Arg-48 and Thr-49. Lys-76 lines the L-aspartate pocket. Carbamoyl phosphate contacts are provided by Arg-98, His-128, and Gln-131. 2 residues coordinate L-aspartate: Arg-161 and Arg-211. Positions 250 and 251 each coordinate carbamoyl phosphate.

This sequence belongs to the aspartate/ornithine carbamoyltransferase superfamily. ATCase family. In terms of assembly, heterododecamer (2C3:3R2) of six catalytic PyrB chains organized as two trimers (C3), and six regulatory PyrI chains organized as three dimers (R2).

The catalysed reaction is carbamoyl phosphate + L-aspartate = N-carbamoyl-L-aspartate + phosphate + H(+). It participates in pyrimidine metabolism; UMP biosynthesis via de novo pathway; (S)-dihydroorotate from bicarbonate: step 2/3. In terms of biological role, catalyzes the condensation of carbamoyl phosphate and aspartate to form carbamoyl aspartate and inorganic phosphate, the committed step in the de novo pyrimidine nucleotide biosynthesis pathway. The sequence is that of Aspartate carbamoyltransferase catalytic subunit from Oceanobacillus iheyensis (strain DSM 14371 / CIP 107618 / JCM 11309 / KCTC 3954 / HTE831).